The primary structure comprises 404 residues: cAMP-dependent protein kinase regulatory subunit (404 aa).

The segment at 14–144 (LTDHELLRIP…RLKTAIAGNF (131 aa)) is dimerization and phosphorylation. The residue at position 105 (Ser105) is a Phosphoserine. 3',5'-cyclic AMP is bound by residues 145 to 276 (LFSH…EKFP), Glu223, Arg232, 277 to 398 (CCRH…GVEE), Glu344, and Arg353.

Belongs to the cAMP-dependent kinase regulatory chain family. Tetramer, composed of 2 regulatory (R) and 2 catalytic (C) subunits. In the presence of cAMP it dissociates into 2 active monomeric C subunits and an R dimer.

In terms of biological role, cAMP-dependent protein kinase PKA regulatory subunit. This Colletotrichum trifolii protein is cAMP-dependent protein kinase regulatory subunit (PKAR).